We begin with the raw amino-acid sequence, 354 residues long: Photosystem II protein D1 2 (354 aa).

3 helical membrane-spanning segments follow: residues 29–46 (YIGWFGVLMIPTLLTATT), 118–133 (HFLIGVFCYMGREWEL), and 142–156 (WIAVAYSAPVAAATA). Position 118 (His-118) interacts with chlorophyll a. Tyr-126 provides a ligand contact to pheophytin a. Positions 170 and 189 each coordinate [CaMn4O5] cluster. The helical transmembrane segment at 197 to 218 (FHQLGVAGVFGGALFSAMHGSL) threads the bilayer. His-198 contacts chlorophyll a. Residues His-215 and 264–265 (SF) each bind a quinone. Position 215 (His-215) interacts with Fe cation. Residue His-272 coordinates Fe cation. Residues 274–288 (FLAAWPVIGIWFTAL) form a helical membrane-spanning segment. His-332, Glu-333, Asp-342, and Ala-344 together coordinate [CaMn4O5] cluster. Positions 345-354 (AVEVAPAVRG) are excised as a propeptide.

This sequence belongs to the reaction center PufL/M/PsbA/D family. As to quaternary structure, PSII is composed of 1 copy each of membrane proteins PsbA, PsbB, PsbC, PsbD, PsbE, PsbF, PsbH, PsbI, PsbJ, PsbK, PsbL, PsbM, PsbT, PsbX, PsbY, PsbZ, Psb30/Ycf12, peripheral proteins PsbO, CyanoQ (PsbQ), PsbU, PsbV and a large number of cofactors. It forms dimeric complexes. The cofactor is The D1/D2 heterodimer binds P680, chlorophylls that are the primary electron donor of PSII, and subsequent electron acceptors. It shares a non-heme iron and each subunit binds pheophytin, quinone, additional chlorophylls, carotenoids and lipids. D1 provides most of the ligands for the Mn4-Ca-O5 cluster of the oxygen-evolving complex (OEC). There is also a Cl(-1) ion associated with D1 and D2, which is required for oxygen evolution. The PSII complex binds additional chlorophylls, carotenoids and specific lipids.. Tyr-161 forms a radical intermediate that is referred to as redox-active TyrZ, YZ or Y-Z. In terms of processing, C-terminally processed by CtpA; processing is essential to allow assembly of the oxygen-evolving complex and thus photosynthetic growth.

It localises to the cellular thylakoid membrane. It carries out the reaction 2 a plastoquinone + 4 hnu + 2 H2O = 2 a plastoquinol + O2. Its function is as follows. Photosystem II (PSII) is a light-driven water:plastoquinone oxidoreductase that uses light energy to abstract electrons from H(2)O, generating O(2) and a proton gradient subsequently used for ATP formation. It consists of a core antenna complex that captures photons, and an electron transfer chain that converts photonic excitation into a charge separation. The D1/D2 (PsbA/PsbD) reaction center heterodimer binds P680, the primary electron donor of PSII as well as several subsequent electron acceptors. The polypeptide is Photosystem II protein D1 2 (Synechococcus sp. (strain JA-2-3B'a(2-13)) (Cyanobacteria bacterium Yellowstone B-Prime)).